A 345-amino-acid polypeptide reads, in one-letter code: Solute carrier family 25 member 43 (345 aa).

Solcar repeat units lie at residues 11 to 100, 104 to 195, and 199 to 297; these read TSSQ…IDEL, SQWR…QERH, and TSLQ…LYRN. The next 6 helical transmembrane spans lie at 16–36, 67–87, 109–129, 165–185, 204–224, and 261–281; these read LMCV…LEVV, FWKG…IHLA, IVAG…LEVV, GFSL…AVYI, FING…FETV, and VMAL…YFGL.

The protein belongs to the mitochondrial carrier (TC 2.A.29) family.

It localises to the mitochondrion inner membrane. This chain is Solute carrier family 25 member 43 (slc25a43), found in Danio rerio (Zebrafish).